Reading from the N-terminus, the 120-residue chain is uncharacterized protein (120 aa).

An N-terminal signal peptide occupies residues 1-18; that stretch reads MRSWIPLLVLFAVLAVFA. The segment at 20 to 99 is disordered; it reads AGKSSESDES…GDNRVKRDGL (80 aa).

This is an uncharacterized protein from Caenorhabditis elegans.